The following is a 1477-amino-acid chain: Ring canal kelch protein (1477 aa).

3 disordered regions span residues 19-62 (LSNG…PGLG), 76-96 (LLQQQQQQHHHHQNPAAEGSG), and 108-137 (SQNSLDESSQKHVQRPNGKERGTVGQYSNE). The span at 20 to 46 (SNGNSNNNNQQQQQQQQGQNPQQPAQN) shows a compositional bias: low complexity. 2 positions are modified to phosphoserine: serine 108 and serine 111. Positions 157–223 (CDVILVADDV…VYTATVEVNE (67 aa)) constitute a BTB domain. Kelch repeat units follow at residues 404–449 (ILLV…VLGD), 450–496 (KVYA…VLNG), 498–543 (IYAV…VVHG), 545–592 (LYAV…VLNN), 594–639 (LYAV…AHDG), and 641–687 (LYVV…MIDK). Position 690 (selenocysteine 690) is a non-standard amino acid, selenocysteine. Disordered stretches follow at residues 744–841 (PAAP…PQRI), 1119–1200 (HSAA…GNGT), 1291–1326 (RDANASARPLHSTLSRLRNGEKRNPNRVAGNYQYED), 1359–1416 (PLLQ…FKPK), and 1446–1477 (PVSLSDNETETTSSQNNLPSTTNSNNLNEHND). Low complexity-rich tracts occupy residues 763–813 (APIG…ANNN) and 820–839 (AAPAPSQQQQQQQAQPQQPQ). Residues 1125–1137 (IPSSSNINANRTT) show a composition bias toward polar residues. The segment covering 1166–1192 (KTTSTGSGKSVTLAKKTSTAAARSSSS) has biased composition (low complexity). Composition is skewed to low complexity over residues 1374-1391 (QQRRLQRQGAQAQQQSQQ) and 1456-1477 (TTSSQNNLPSTTNSNNLNEHND).

In terms of tissue distribution, both proteins are expressed in ovaries, male testis, ovariectomized females, cuticle, salivary gland and imaginal disks. Kelch short protein is the predominant form and is also expressed in fat bodies. On entry into metamorphosis levels of full-length protein increase in testis and imaginal disks.

Its subcellular location is the cytoplasm. The protein localises to the cytoskeleton. Functionally, component of ring canals that regulates the flow of cytoplasm between cells. May be involved in the regulation of cytoplasm flow from nurse cells to the oocyte during oogenesis. Binds actin. The sequence is that of Ring canal kelch protein (kel) from Drosophila melanogaster (Fruit fly).